We begin with the raw amino-acid sequence, 231 residues long: PIAGSMVLAAILLKLGGYGIIRMMQILPATKTDMFLPFIVLALWGAILANLTCLQQTDLKSLIAYSSISHMGLVVAAIIIQTPWGLSGAMALMIAHGFTSSALFCLANTTYERTHTRILILTRGFHNILPMTTTWWLFVNLMNIAIPPTMNFTSELLIMSTLFNWCPTTIIMLGLSMLITASYSLHMFLSTQMGPTPLNNQTEPTHSREHLLMALHVIPLMMISMKPELIT.

Helical transmembrane passes span 1 to 21 (PIAGSMVLAAILLKLGGYGII), 34 to 54 (MFLPFIVLALWGAILANLTCL), 63 to 85 (IAYSSISHMGLVVAAIIIQTPWG), 89 to 111 (AMALMIAHGFTSSALFCLANTTY), 128 to 148 (ILPMTTTWWLFVNLMNIAIPP), and 169 to 189 (TIIMLGLSMLITASYSLHMFL).

Belongs to the complex I subunit 4 family.

The protein resides in the mitochondrion membrane. The enzyme catalyses a ubiquinone + NADH + 5 H(+)(in) = a ubiquinol + NAD(+) + 4 H(+)(out). Core subunit of the mitochondrial membrane respiratory chain NADH dehydrogenase (Complex I) that is believed to belong to the minimal assembly required for catalysis. Complex I functions in the transfer of electrons from NADH to the respiratory chain. The immediate electron acceptor for the enzyme is believed to be ubiquinone. This is NADH-ubiquinone oxidoreductase chain 4 (MT-ND4) from Deinagkistrodon acutus (Hundred-pace snake).